A 273-amino-acid chain; its full sequence is UPF0380 protein YafZ (273 aa).

The protein belongs to the UPF0380 family.

This chain is UPF0380 protein YafZ (yafZ), found in Escherichia coli (strain K12).